The sequence spans 436 residues: Putative ankyrin repeat protein FPV245 (436 aa).

ANK repeat units follow at residues 1–30, 34–63, 67–96, 98–119, 123–152, 156–185, 189–218, 222–252, 253–283, and 287–317; these read MSVDWRTEIYSGDISLVEKLIKNKGNCINI, ETTTPLIDAIRTGNAKIVELFIKHGAQVNH, KIPNPLLTAIKIGSHDIVKLLLINGVDTSI, PVPCINKEMIKTILDSGVKVNT, KSKTFLHYAIKNNDLEVIKMLFEYGADVNI, NGCYPIHIATRSNSYEIIKLLLEKGAYANV, YGNSPLHNAAKYGDYACIKLVLDHTNNISN, NGVTPLHNAILYNRSAVELLINNRSINDTDV, DGYTPLHYALQPPCSIDIIDILLYNNADISI, and NGRNPIDTAFKYINRDSVIKELLANAVLINE.

This chain is Putative ankyrin repeat protein FPV245, found in Vertebrata (FPV).